A 193-amino-acid chain; its full sequence is Sporulation-specific transcriptional regulator GerR (193 aa).

In terms of domain architecture, HTH myb-type spans 1-61 (MTITRQDAWT…RWNSYVRKQY (61 aa)). The H-T-H motif DNA-binding region spans 35–57 (FEEVGRALTRTAAACGFRWNSYV). The stretch at 122 to 177 (AQEFQLEREKLKEQIQSLQKELEDLRSENQTLRNQLEMTEEDYKALIDIMDRARKM) forms a coiled coil.

It belongs to the RsfA transcriptional regulator family.

Transcriptional factor that regulates the expression of several late sporulation genes. Controls genes of both sigma-E and sigma-K regulons, acting alone on some genes and in conjunction with SpoIIID or GerE on others. Regulates, directly or indirectly, the expression of genes encoding coat proteins such as cgeA, cotB, cotC, cotG, cotU and cotY. Controls late sporulation genes in two ways: directly, by binding to the promoter region of genes such as cotB, cotU and spoVIF, and acting directly on their transcription, and indirectly, through the activation of SpoVIF, which stabilizes the transcriptional activator GerE and consequently induces the expression of the GerE-dependent genes, such as cotC and cotG. Its effect is strongly positive on spoVIF, cotC, and cotG, weakly positive on cotB, and negative on cotU. This Bacillus subtilis (strain 168) protein is Sporulation-specific transcriptional regulator GerR.